The chain runs to 307 residues: Porphobilinogen deaminase (307 aa).

S-(dipyrrolylmethanemethyl)cysteine is present on cysteine 241.

The protein belongs to the HMBS family. As to quaternary structure, monomer. It depends on dipyrromethane as a cofactor.

The enzyme catalyses 4 porphobilinogen + H2O = hydroxymethylbilane + 4 NH4(+). The protein operates within porphyrin-containing compound metabolism; protoporphyrin-IX biosynthesis; coproporphyrinogen-III from 5-aminolevulinate: step 2/4. Functionally, tetrapolymerization of the monopyrrole PBG into the hydroxymethylbilane pre-uroporphyrinogen in several discrete steps. The protein is Porphobilinogen deaminase of Coxiella burnetii (strain RSA 331 / Henzerling II).